The sequence spans 122 residues: UPF0231 protein VSAL_I2591 (122 aa).

This sequence belongs to the UPF0231 family.

This is UPF0231 protein VSAL_I2591 from Aliivibrio salmonicida (strain LFI1238) (Vibrio salmonicida (strain LFI1238)).